The following is a 962-amino-acid chain: Vacuolar membrane protease (962 aa).

The Cytoplasmic portion of the chain corresponds to 1 to 14 (MLAQFLRSLFRFRK). Residues 15–35 (TTVSVLLVATYVVVFLLNVWD) form a helical membrane-spanning segment. Residues 36–359 (RIRYQYSLPE…FVTASTKDLF (324 aa)) lie on the Vacuolar side of the membrane. N118 is a glycosylation site (N-linked (GlcNAc...) asparagine). Residues H153 and D165 each contribute to the Zn(2+) site. E197 (proton acceptor) is an active-site residue. Zn(2+) contacts are provided by E198, E223, and H297. The chain crosses the membrane as a helical span at residues 360-380 (TLNCVVLSVIPVIILVLEFVI). The Cytoplasmic segment spans residues 381–390 (QRRKTRERNP). The chain crosses the membrane as a helical span at residues 391–411 (LLVWLRLPFSMFISYLVTATF). Over 412-431 (RSSLFRVNPLIFSRDYVSPT) the chain is Vacuolar. The chain crosses the membrane as a helical span at residues 432–452 (IGFSFTFLILNYLVLSLLEYL). At 453–460 (APSRDLKT) the chain is on the cytoplasmic side. The helical transmembrane segment at 461 to 481 (VSFVELFFGMWIALLWATIRL) threads the bilayer. The Vacuolar segment spans residues 482-489 (CTSKYTAT). A helical transmembrane segment spans residues 490-510 (GVYPITVLYLLMSFGAIVGLV). Residues 511 to 601 (CSAFKRKHSV…VVSALNYDWS (91 aa)) are Cytoplasmic-facing. The segment covering 531 to 554 (APNTYSSIEESPQQATNTEAPNEN) has biased composition (polar residues). Residues 531-563 (APNTYSSIEESPQQATNTEAPNENSPEEHDERA) are disordered. Residues 602–622 (VQFLAVVPLASFFVIMCLSLI) form a helical membrane-spanning segment. At 623-639 (LDGIYQTCQEGFQATWN) the chain is on the vacuolar side. N639 carries N-linked (GlcNAc...) asparagine glycosylation. The helical transmembrane segment at 640–660 (VSKISMLGGMLLAIPVLPFCY) threads the bilayer. A topological domain (cytoplasmic) is located at residue K661. A helical membrane pass occupies residues 662 to 682 (LNYFVSMVLLFAAASAGIFSF). Residues 683–962 (ERAPFTESSP…LVIVNDYIEL (280 aa)) are Vacuolar-facing. Residues N812 and N839 are each glycosylated (N-linked (GlcNAc...) asparagine).

The protein belongs to the peptidase M28 family. Requires Zn(2+) as cofactor.

The protein localises to the vacuole membrane. Functionally, may be involved in vacuolar sorting and osmoregulation. This is Vacuolar membrane protease from Lachancea thermotolerans (strain ATCC 56472 / CBS 6340 / NRRL Y-8284) (Yeast).